A 1581-amino-acid chain; its full sequence is Pentafunctional AROM polypeptide (1581 aa).

Residues 1-384 (MPEPTKISIL…YEPKASVVPN (384 aa)) form a 3-dehydroquinate synthase region. Residues 44 to 46 (DTN), 81 to 84 (EVSK), 114 to 116 (GGV), and Asp119 contribute to the NAD(+) site. Arg130 serves as a coordination point for 7-phospho-2-dehydro-3-deoxy-D-arabino-heptonate. Residue 139–140 (TT) participates in NAD(+) binding. Residues Asp146 and Lys152 each coordinate 7-phospho-2-dehydro-3-deoxy-D-arabino-heptonate. Residue Lys161 coordinates NAD(+). Position 162 (Asn162) interacts with 7-phospho-2-dehydro-3-deoxy-D-arabino-heptonate. NAD(+) is bound by residues 179–182 (FLET) and Asn190. Glu194 contributes to the Zn(2+) binding site. 7-phospho-2-dehydro-3-deoxy-D-arabino-heptonate is bound by residues 194–197 (EVIK) and Lys250. Glu260 (proton acceptor; for 3-dehydroquinate synthase activity) is an active-site residue. Residues 264–268 (RNLLN) and His271 contribute to the 7-phospho-2-dehydro-3-deoxy-D-arabino-heptonate site. Residue His271 participates in Zn(2+) binding. The Proton acceptor; for 3-dehydroquinate synthase activity role is filled by His275. Residues His287 and Lys356 each coordinate 7-phospho-2-dehydro-3-deoxy-D-arabino-heptonate. Position 287 (His287) interacts with Zn(2+). The tract at residues 397-842 (VHPGVPKESN…WDTLRQLFSV (446 aa)) is EPSP synthase. The active-site For EPSP synthase activity is the Cys824. A shikimate kinase region spans residues 864-1056 (SASVFIIGMR…KQKKHSFFVS (193 aa)). Residue 871–878 (GMRGAGKT) participates in ATP binding. Residues 1057–1277 (LTLPDLRSAS…AAPGQLSATE (221 aa)) form a 3-dehydroquinase region. His1180 acts as the Proton acceptor; for 3-dehydroquinate dehydratase activity in catalysis. Residue Lys1208 is the Schiff-base intermediate with substrate; for 3-dehydroquinate dehydratase activity of the active site. The interval 1290–1581 (KKRFAIFGNP…ARTAVLGDSA (292 aa)) is shikimate dehydrogenase.

The protein in the N-terminal section; belongs to the sugar phosphate cyclases superfamily. Dehydroquinate synthase family. It in the 2nd section; belongs to the EPSP synthase family. This sequence in the 3rd section; belongs to the shikimate kinase family. In the 4th section; belongs to the type-I 3-dehydroquinase family. The protein in the C-terminal section; belongs to the shikimate dehydrogenase family. Homodimer. The cofactor is Zn(2+).

The protein resides in the cytoplasm. The enzyme catalyses 7-phospho-2-dehydro-3-deoxy-D-arabino-heptonate = 3-dehydroquinate + phosphate. It catalyses the reaction 3-dehydroquinate = 3-dehydroshikimate + H2O. It carries out the reaction shikimate + NADP(+) = 3-dehydroshikimate + NADPH + H(+). The catalysed reaction is shikimate + ATP = 3-phosphoshikimate + ADP + H(+). The enzyme catalyses 3-phosphoshikimate + phosphoenolpyruvate = 5-O-(1-carboxyvinyl)-3-phosphoshikimate + phosphate. The protein operates within metabolic intermediate biosynthesis; chorismate biosynthesis; chorismate from D-erythrose 4-phosphate and phosphoenolpyruvate: step 2/7. It functions in the pathway metabolic intermediate biosynthesis; chorismate biosynthesis; chorismate from D-erythrose 4-phosphate and phosphoenolpyruvate: step 3/7. It participates in metabolic intermediate biosynthesis; chorismate biosynthesis; chorismate from D-erythrose 4-phosphate and phosphoenolpyruvate: step 4/7. Its pathway is metabolic intermediate biosynthesis; chorismate biosynthesis; chorismate from D-erythrose 4-phosphate and phosphoenolpyruvate: step 5/7. The protein operates within metabolic intermediate biosynthesis; chorismate biosynthesis; chorismate from D-erythrose 4-phosphate and phosphoenolpyruvate: step 6/7. The AROM polypeptide catalyzes 5 consecutive enzymatic reactions in prechorismate polyaromatic amino acid biosynthesis. The polypeptide is Pentafunctional AROM polypeptide (Aspergillus terreus (strain NIH 2624 / FGSC A1156)).